Reading from the N-terminus, the 103-residue chain is UPF0145 protein CYB_1351 (103 aa).

It belongs to the UPF0145 family.

This chain is UPF0145 protein CYB_1351, found in Synechococcus sp. (strain JA-2-3B'a(2-13)) (Cyanobacteria bacterium Yellowstone B-Prime).